The sequence spans 510 residues: MKTTILLMFLWGLSCALPVARYQNTESKSSEEWKGHLAQTPTPPLESSESSEESKLSSEEQANEDPSDSTESEEVLGLDDQQHVHRPAGGLSRRGGSEGDNKDDDEDESGDDTFGDDDGGPGPEERRSGGDSRLGSDEDSADTTRSREDSTPQGDEGARDTTSESRDLDREDEGNSRPEGGDSTPDSDSEEHWVGGGSEGDSSHGDGSEFDDEGMQSDDPGAYRSERGNSRISDAGLKSTQSKGDDEEQASTQDSHESPAAAYPRRKFFRKSRLPEEDGRGELDDSRTIEVMSDSTENPDSKEAGLGQSREHSKSESRQESEENRSPEDSQDVQDPSSESSQEVDLPSQENSSESQEEALHESRGDNPDNATSHSREHQADSESSEEDVLDKPSDSESTSTEEQADSESHESLRSSEESPESTEEQNSSSQEGAQTQSRSQESPSEEDDGSDSQDSSRSKEDSNSTESVSSSEEEAQTKNTEVESRKLTVDAYHNKPIGDQDDNDCQDGY.

The signal sequence occupies residues methionine 1–alanine 16. Positions glutamine 23–tyrosine 510 are disordered. Acidic residues-rich tracts occupy residues glutamine 61 to glycine 77 and asparagine 101 to glycine 119. Composition is skewed to basic and acidic residues over residues proline 123–glycine 180, arginine 273–threonine 288, and proline 299–glutamate 328. The segment covering valine 333–glutamate 343 has biased composition (polar residues). The N-linked (GlcNAc...) asparagine glycan is linked to asparagine 351. Positions glutamate 358 to asparagine 367 are enriched in basic and acidic residues. Positions arginine 364 to aspartate 366 match the Cell attachment site motif. A glycan (N-linked (GlcNAc...) asparagine) is linked at asparagine 370. Over residues serine 407–glutamate 417 the composition is skewed to basic and acidic residues. N-linked (GlcNAc...) asparagine glycans are attached at residues asparagine 427 and asparagine 464. The segment covering threonine 481–glycine 499 has biased composition (basic and acidic residues). Over residues aspartate 500–tyrosine 510 the composition is skewed to acidic residues.

Interacts with importin alpha. Post-translationally, phosphorylated in the cytosol and extracellular matrix and unphosphorylated in the nucleus. Phosphorylation is necessary for nucleocytoplasmic transport and may be catalyzed by a nuclear isoform of CK2 and can be augmented by calcium. Phosphorylated (in vitro) by FAM20C in the extracellular medium at sites within the S-x-E/pS motif. As to expression, expressed in fetal brain, bone and tooth particularly in odontoblast, but not in ameloblast. Not expressed in liver and skin.

It is found in the nucleus. It localises to the cytoplasm. Its subcellular location is the secreted. The protein localises to the extracellular space. The protein resides in the extracellular matrix. Its function is as follows. May have a dual function during osteoblast differentiation. In the nucleus of undifferentiated osteoblasts, unphosphorylated form acts as a transcriptional component for activation of osteoblast-specific genes like osteocalcin. During the osteoblast to osteocyte transition phase it is phosphorylated and exported into the extracellular matrix, where it regulates nucleation of hydroxyapatite. This Bos taurus (Bovine) protein is Dentin matrix acidic phosphoprotein 1 (DMP1).